The following is a 219-amino-acid chain: tRNA (guanine-N(7)-)-methyltransferase (219 aa).

S-adenosyl-L-methionine contacts are provided by E46, E71, N100, and D122. The active site involves D122. Substrate-binding positions include K126, D158, and 199–202; that span reads TEYE.

Belongs to the class I-like SAM-binding methyltransferase superfamily. TrmB family.

It carries out the reaction guanosine(46) in tRNA + S-adenosyl-L-methionine = N(7)-methylguanosine(46) in tRNA + S-adenosyl-L-homocysteine. It functions in the pathway tRNA modification; N(7)-methylguanine-tRNA biosynthesis. Catalyzes the formation of N(7)-methylguanine at position 46 (m7G46) in tRNA. The protein is tRNA (guanine-N(7)-)-methyltransferase of Leuconostoc mesenteroides subsp. mesenteroides (strain ATCC 8293 / DSM 20343 / BCRC 11652 / CCM 1803 / JCM 6124 / NCDO 523 / NBRC 100496 / NCIMB 8023 / NCTC 12954 / NRRL B-1118 / 37Y).